Consider the following 343-residue polypeptide: Membrane progestin receptor delta (343 aa).

Residues 1-49 lie on the Cytoplasmic side of the membrane; that stretch reads MLSLKMPQLLRVHQVPRVFWEEGIMSGYRCPTSSALDCVLSSFQMTNET. A helical membrane pass occupies residues 50–70; that stretch reads VNIWTHFLPTWYFLWRLLALG. The Extracellular portion of the chain corresponds to 71 to 79; that stretch reads SPGFRADPY. Residues 80–100 form a helical membrane-spanning segment; that stretch reads HLPLLVFLLPACLYPFASCCA. The Cytoplasmic portion of the chain corresponds to 101–112; it reads HTFSSMSPRARH. The chain crosses the membrane as a helical span at residues 113–133; it reads ICYFLDYGALSLYSLGCAFPY. Residues 134–146 lie on the Extracellular side of the membrane; sequence AAYSMPASWLHSR. A helical membrane pass occupies residues 147–167; the sequence is LHQLFVPAAALNSFLCTGLSC. Topologically, residues 168–216 are cytoplasmic; the sequence is YSRFPELEYPGFSKALRTAAFAYPFLFDNLPLFYRLRLCWGGAHSCGRD. The helical transmembrane segment at 217–237 threads the bilayer; sequence ALSSNHGYHLLCALLSGFLFA. Over 238–257 the chain is Extracellular; it reads ARLPERLAPGRFDYIGHSHQ. The helical transmembrane segment at 258-278 threads the bilayer; it reads LFHICAVLGTHFQLEAVLADM. At 279 to 291 the chain is on the cytoplasmic side; it reads GSRRAWLAVQEPT. A helical transmembrane segment spans residues 292-312; sequence LGLGATVATLSLAVIGNLFII. Residues 313-343 lie on the Extracellular side of the membrane; sequence AAFTASLLRMPGPCPLLQGSPLEEGLQAKQQ.

Belongs to the ADIPOR family. As to quaternary structure, homodimer.

The protein localises to the cell membrane. Its function is as follows. Plasma membrane progesterone (P4) receptor coupled to G proteins. Seems to act through a G(s) mediated pathway. Involved in neurosteroid inhibition of apoptosis. May be involved in regulating rapid P4 signaling in the nervous system. Also binds dehydroepiandrosterone (DHEA), pregnanolone, pregnenolone and allopregnanolone. This Mus musculus (Mouse) protein is Membrane progestin receptor delta.